The primary structure comprises 771 residues: MDATQITLVRESGHICAASIYTSWTQSGQLTQNGLSVLYYLLCKNSCGKYVPKFAEITVQQEDLCRYSRHGGSVSAATFASICRAASSAALDAWPLEPLGNADTWRCLHGTALATLRRVLGFKSFYSPVTFETDTNTGLLLKTIPDEHALNNDNTPSTGVLRANFPVAIDVSAVSACNAHTQGTSLAYARLTALKSNGDTQQQTPLDVEVITPKAYIRRKYKSTFSPPIEREGQTSDLFNLEERRLVLSGNRAIVVRVLLPCYFDCLTTDSTVTSSLSILATYRLWYAAAFGKPGVVRPIFAYLGPELNPKGEDRDYFCTVGFPGWTTLRTQTPAVESIRTATEMYMETDGLWPVTGIQAFHYLAPWGQHPPLPPRVQDLIGQIPQDTGHADATVNWDAGRISTVFKQPVQLQDRWMAKFDFSAFFPTIYCAMFPMHFRLGKIVLARMRRGMGCLKPALVSFFGGLRHILPSIYKAIIFIANEISLCVEQTALEQGFAICTYIKDGFWGIFTDLHTRNVCSDQARCSALNLAATCERAVTGLLRIQLGLNFTPAMEPVLRVEGVYTHAFTWCTTGSWLWNLQTNTPPDLVGVPWRSQAARDLKERLSGLLCTATKIRERIQENCIWDHVLYDIWAGQVVEAARKTYVDFFEHVFDRRYTPVYWSLQEQNSETKAIPASYLTYGHMQDKDYKPRQIIMVRNPNPHGPPTVVYWELLPSCACIPPIDCAAHLKPLIHTFVTIINHLLDAHNDFSSPSLKFTDDPLASYNFLFL.

Belongs to the herpesviridae HEPA family. As to quaternary structure, associates with the primase and the helicase to form the helicase-primase complex. Interacts with the origin-binding protein. Interacts with the polymerase catalytic subunit.

It is found in the host nucleus. In terms of biological role, component of the helicase/primase complex. Unwinds the DNA at the replication forks and generates single-stranded DNA for both leading and lagging strand synthesis. The primase synthesizes short RNA primers on the lagging strand that the polymerase presumably elongates using dNTPs. The primase-associated factor has no known catalytic activity in the complex and may serve to facilitate the formation of the replisome by directly interacting with the origin-binding protein and the polymerase. This is DNA helicase/primase complex-associated protein from Homo sapiens (Human).